A 293-amino-acid chain; its full sequence is DNA-directed RNA polymerase III subunit rpc6 (293 aa).

It belongs to the eukaryotic RPC34/RPC39 RNA polymerase subunit family. Component of the RNA polymerase III (Pol III) complex.

The protein resides in the nucleus. Functionally, DNA-dependent RNA polymerase catalyzes the transcription of DNA into RNA using the four ribonucleoside triphosphates as substrates. Specific peripheric component of RNA polymerase III which synthesizes small RNAs, such as 5S rRNA and tRNAs. May direct RNA Pol III binding to the TFIIIB-DNA complex. The protein is DNA-directed RNA polymerase III subunit rpc6 (polr3f) of Dictyostelium discoideum (Social amoeba).